The sequence spans 429 residues: tRNA-2-methylthio-N(6)-dimethylallyladenosine synthase (429 aa).

One can recognise an MTTase N-terminal domain in the interval 1–110 (MKFFIKTYGC…IPEAVELSIK (110 aa)). Residues Cys-10, Cys-46, Cys-75, Cys-146, Cys-150, and Cys-153 each coordinate [4Fe-4S] cluster. In terms of domain architecture, Radical SAM core spans 132-364 (RNSKHHAWIT…NLQKEINKML (233 aa)). A TRAM domain is found at 366 to 427 (ESYLDKTVEV…AGPLYGDIIK (62 aa)).

The protein belongs to the methylthiotransferase family. MiaB subfamily. As to quaternary structure, monomer. Requires [4Fe-4S] cluster as cofactor.

The protein resides in the cytoplasm. It catalyses the reaction N(6)-dimethylallyladenosine(37) in tRNA + (sulfur carrier)-SH + AH2 + 2 S-adenosyl-L-methionine = 2-methylsulfanyl-N(6)-dimethylallyladenosine(37) in tRNA + (sulfur carrier)-H + 5'-deoxyadenosine + L-methionine + A + S-adenosyl-L-homocysteine + 2 H(+). Its function is as follows. Catalyzes the methylthiolation of N6-(dimethylallyl)adenosine (i(6)A), leading to the formation of 2-methylthio-N6-(dimethylallyl)adenosine (ms(2)i(6)A) at position 37 in tRNAs that read codons beginning with uridine. In Thermosipho africanus (strain TCF52B), this protein is tRNA-2-methylthio-N(6)-dimethylallyladenosine synthase.